The following is a 255-amino-acid chain: Pyridoxine 5'-phosphate synthase (255 aa).

Residues N8 and R19 each coordinate 3-amino-2-oxopropyl phosphate. H44 functions as the Proton acceptor in the catalytic mechanism. Positions 46 and 51 each coordinate 1-deoxy-D-xylulose 5-phosphate. Residue E74 is the Proton acceptor of the active site. A 1-deoxy-D-xylulose 5-phosphate-binding site is contributed by T111. Catalysis depends on H202, which acts as the Proton donor. Residues D203 and 225-226 (GH) contribute to the 3-amino-2-oxopropyl phosphate site.

The protein belongs to the PNP synthase family. Homooctamer; tetramer of dimers.

It is found in the cytoplasm. The enzyme catalyses 3-amino-2-oxopropyl phosphate + 1-deoxy-D-xylulose 5-phosphate = pyridoxine 5'-phosphate + phosphate + 2 H2O + H(+). It participates in cofactor biosynthesis; pyridoxine 5'-phosphate biosynthesis; pyridoxine 5'-phosphate from D-erythrose 4-phosphate: step 5/5. Functionally, catalyzes the complicated ring closure reaction between the two acyclic compounds 1-deoxy-D-xylulose-5-phosphate (DXP) and 3-amino-2-oxopropyl phosphate (1-amino-acetone-3-phosphate or AAP) to form pyridoxine 5'-phosphate (PNP) and inorganic phosphate. The polypeptide is Pyridoxine 5'-phosphate synthase (Xanthomonas axonopodis pv. citri (strain 306)).